Here is a 516-residue protein sequence, read N- to C-terminus: Protein BTN1 (516 aa).

8 helical membrane-spanning segments follow: residues 24–44 (LFAA…IILS), 57–77 (GVVA…WPLL), 88–108 (VGFC…SSSL), 112–132 (LLGI…FLQL), 146–166 (LGAW…IWWL), 169–189 (GLGV…FPIT), 371–391 (PAII…TFFF), and 409–429 (SITI…SGYV).

This sequence belongs to the battenin family.

The protein localises to the vacuole membrane. In terms of biological role, involved in vacuolar transport and vacuole pH homeostasis. Also required for cytokinesis. The chain is Protein BTN1 (BTN1) from Cryptococcus neoformans var. neoformans serotype D (strain JEC21 / ATCC MYA-565) (Filobasidiella neoformans).